A 260-amino-acid chain; its full sequence is MAKDNSTVRCFQGLLIFGNVIIGCCGIALTAECIFFVSDQHSLYPLLEATDNDDIYGAAWIGIFVGICLFCLSVLGIVGIMKSSRKILLAYFILMFIVYAFEVASCITAATQQDFFTPNLFLKQMLERYQNNSPPNNDDQWKNNGVTKTWDRLMLQDNCCGVNGPSDWQKYTSAFRTENNDADYPWPRQCCVMNNLKEPLNLEACKLGVPGFYHNQGCYELISGPMNRHAWGVAWFGFAILCWTFWVLLGTMFYWSRIEY.

At 1-15 the chain is on the cytoplasmic side; it reads MAKDNSTVRCFQGLL. The helical transmembrane segment at 16–36 threads the bilayer; that stretch reads IFGNVIIGCCGIALTAECIFF. Topologically, residues 37–60 are extracellular; the sequence is VSDQHSLYPLLEATDNDDIYGAAW. Residues 61 to 81 form a helical membrane-spanning segment; it reads IGIFVGICLFCLSVLGIVGIM. The Cytoplasmic portion of the chain corresponds to 82-86; that stretch reads KSSRK. A helical transmembrane segment spans residues 87 to 107; it reads ILLAYFILMFIVYAFEVASCI. Topologically, residues 108-229 are extracellular; sequence TAATQQDFFT…ELISGPMNRH (122 aa). Residues 230-250 traverse the membrane as a helical segment; it reads AWGVAWFGFAILCWTFWVLLG. The Cytoplasmic segment spans residues 251–260; sequence TMFYWSRIEY.

The protein belongs to the tetraspanin (TM4SF) family. Heterodimer with uroplakin-3A (UPK3A) or uroplakin-3B (UPK3B). N-glycosylated with high-mannose oligosaccharides. Bladder epithelium.

Its subcellular location is the membrane. Component of the asymmetric unit membrane (AUM); a highly specialized biomembrane elaborated by terminally differentiated urothelial cells. May play an important role in normal bladder epithelial physiology, possibly in regulating membrane permeability of superficial umbrella cells or in stabilizing the apical membrane through AUM/cytoskeletal interactions. This Homo sapiens (Human) protein is Uroplakin-1b (UPK1B).